The primary structure comprises 182 residues: Homeobox expressed in ES cells 1-A (182 aa).

The segment at residues 103 to 163 (YRGRRPRTAF…QNRRAKLKRS (61 aa)) is a DNA-binding region (homeobox).

The protein belongs to the ANF homeobox family. Initially expressed in the anterior dorsal region of early embryos and later exclusively in the primordium of the anterior pituitary gland.

The protein resides in the nucleus. Appears to be involved in the regional specification of the anterior head of Xenopus embryos. In Xenopus laevis (African clawed frog), this protein is Homeobox expressed in ES cells 1-A (hesx1-a).